Reading from the N-terminus, the 405-residue chain is Argininosuccinate synthase (405 aa).

ATP contacts are provided by residues 10–18 (AYSGGLDTS) and A37. 2 residues coordinate L-citrulline: Y88 and S93. G118 contributes to the ATP binding site. The L-aspartate site is built by T120, N124, and D125. N124 serves as a coordination point for L-citrulline. Positions 128, 179, 188, 264, and 276 each coordinate L-citrulline.

This sequence belongs to the argininosuccinate synthase family. Type 1 subfamily. As to quaternary structure, homotetramer.

It localises to the cytoplasm. It catalyses the reaction L-citrulline + L-aspartate + ATP = 2-(N(omega)-L-arginino)succinate + AMP + diphosphate + H(+). It participates in amino-acid biosynthesis; L-arginine biosynthesis; L-arginine from L-ornithine and carbamoyl phosphate: step 2/3. The chain is Argininosuccinate synthase from Pseudomonas fluorescens (strain ATCC BAA-477 / NRRL B-23932 / Pf-5).